Consider the following 173-residue polypeptide: NADH-ubiquinone oxidoreductase chain 6 (173 aa).

5 consecutive transmembrane segments (helical) span residues Met1 to Ser21, Pro25 to Gly45, Leu53 to Leu73, Trp82 to Gly102, and Gly141 to Leu161.

This sequence belongs to the complex I subunit 6 family.

It localises to the mitochondrion membrane. The enzyme catalyses a ubiquinone + NADH + 5 H(+)(in) = a ubiquinol + NAD(+) + 4 H(+)(out). Its function is as follows. Core subunit of the mitochondrial membrane respiratory chain NADH dehydrogenase (Complex I) that is believed to belong to the minimal assembly required for catalysis. Complex I functions in the transfer of electrons from NADH to the respiratory chain. The immediate electron acceptor for the enzyme is believed to be ubiquinone. This chain is NADH-ubiquinone oxidoreductase chain 6 (MT-ND6), found in Squalus acanthias (Spiny dogfish).